Reading from the N-terminus, the 94-residue chain is MKIRPLGDRVVIKKIEAEETTKSGIVLPGSAKEKPQEAEIVAVGPGGVIDGKEIKMEVKVGDRVLFSKYAGNEVKIDGVEYTILRQDDILAIIE.

This sequence belongs to the GroES chaperonin family. As to quaternary structure, heptamer of 7 subunits arranged in a ring. Interacts with the chaperonin GroEL.

It localises to the cytoplasm. Functionally, together with the chaperonin GroEL, plays an essential role in assisting protein folding. The GroEL-GroES system forms a nano-cage that allows encapsulation of the non-native substrate proteins and provides a physical environment optimized to promote and accelerate protein folding. GroES binds to the apical surface of the GroEL ring, thereby capping the opening of the GroEL channel. This is Co-chaperonin GroES from Clostridium kluyveri (strain NBRC 12016).